Consider the following 150-residue polypeptide: MFIGRHYRKKRALSLLAVRTTQKARKLLIVMWTPPRNDQQYLNWQWYSSVLSSHAAMCGCPDAVAHFNHLASVLRAPQNPPPPGPQRNLPLRRLPALPAAPEAPGDRAPWPMAGGAEGEEGGAGGDADHGGAAGGPEDADLLDAVAAAET.

The tract at residues 75–150 is disordered; sequence RAPQNPPPPG…LLDAVAAAET (76 aa). Residues 86 to 103 show a composition bias toward low complexity; sequence QRNLPLRRLPALPAAPEA.

This is an uncharacterized protein from Homo sapiens (Human).